Consider the following 339-residue polypeptide: Uroporphyrinogen decarboxylase (339 aa).

Residues 21 to 25 (RQAGR), aspartate 71, tyrosine 147, serine 202, and histidine 315 contribute to the substrate site.

Belongs to the uroporphyrinogen decarboxylase family. Homodimer.

The protein resides in the cytoplasm. It carries out the reaction uroporphyrinogen III + 4 H(+) = coproporphyrinogen III + 4 CO2. The protein operates within porphyrin-containing compound metabolism; protoporphyrin-IX biosynthesis; coproporphyrinogen-III from 5-aminolevulinate: step 4/4. Its function is as follows. Catalyzes the decarboxylation of four acetate groups of uroporphyrinogen-III to yield coproporphyrinogen-III. The sequence is that of Uroporphyrinogen decarboxylase from Helicobacter pylori (strain HPAG1).